Here is a 350-residue protein sequence, read N- to C-terminus: Renin receptor (350 aa).

The N-terminal stretch at 1 to 17 is a signal peptide; the sequence is MAVLVVLLSSLVSSALA. Residues 18–302 are Extracellular-facing; that stretch reads NEFSILRSPG…YNLAYKYNLE (285 aa). The helical transmembrane segment at 303 to 323 threads the bilayer; sequence YSVVFNLVLWIMTGLALAVII. Over 324–350 the chain is Cytoplasmic; sequence TSYNIWNMDPGYDSIIYRMTNQKIRMD. The short motif at 346–350 is the Mediates retrograde transport to the ER element; it reads KIRMD.

In terms of assembly, interacts with renin. Accessory component of the multisubunit proton-transporting vacuolar (V)-ATPase protein pump. Interacts (via N-terminus) with ATP6AP1 (via N-terminus). Interacts with ATP6V0D1; ATP6V0D1 is a V-ATPase complex subunit and the interaction promotes V-ATPase complex assembly. Interacts with TMEM9; TMEM9 is a V-ATPase assembly regulator and the interaction induces the interaction with ATP6V0D1. Interacts with VMA21 (via N-terminus); VMA21 is a V-ATPase accessory component. Post-translationally, phosphorylated. Proteolytically cleaved by a furin-like convertase in the trans-Golgi network to generate N- and C-terminal fragments. In terms of tissue distribution, expressed in the brain.

The protein localises to the endoplasmic reticulum membrane. The protein resides in the lysosome membrane. It is found in the cytoplasmic vesicle. It localises to the autophagosome membrane. Its subcellular location is the cell projection. The protein localises to the dendritic spine membrane. The protein resides in the axon. It is found in the endosome membrane. It localises to the clathrin-coated vesicle membrane. Its subcellular location is the secretory vesicle. The protein localises to the synaptic vesicle membrane. Multifunctional protein which functions as a renin, prorenin cellular receptor and is involved in the assembly of the lysosomal proton-transporting V-type ATPase (V-ATPase) and the acidification of the endo-lysosomal system. May mediate renin-dependent cellular responses by activating ERK1 and ERK2. By increasing the catalytic efficiency of renin in AGT/angiotensinogen conversion to angiotensin I, may also play a role in the renin-angiotensin system (RAS). Through its function in V-type ATPase (v-ATPase) assembly and acidification of the lysosome it regulates protein degradation and may control different signaling pathways important for proper brain development, synapse morphology and synaptic transmission. In Rattus norvegicus (Rat), this protein is Renin receptor (Atp6ap2).